Here is a 262-residue protein sequence, read N- to C-terminus: Acyl-[acyl-carrier-protein]--UDP-N-acetylglucosamine O-acyltransferase (262 aa).

Belongs to the transferase hexapeptide repeat family. LpxA subfamily. In terms of assembly, homotrimer.

It is found in the cytoplasm. It catalyses the reaction a (3R)-hydroxyacyl-[ACP] + UDP-N-acetyl-alpha-D-glucosamine = a UDP-3-O-[(3R)-3-hydroxyacyl]-N-acetyl-alpha-D-glucosamine + holo-[ACP]. It participates in glycolipid biosynthesis; lipid IV(A) biosynthesis; lipid IV(A) from (3R)-3-hydroxytetradecanoyl-[acyl-carrier-protein] and UDP-N-acetyl-alpha-D-glucosamine: step 1/6. In terms of biological role, involved in the biosynthesis of lipid A, a phosphorylated glycolipid that anchors the lipopolysaccharide to the outer membrane of the cell. The chain is Acyl-[acyl-carrier-protein]--UDP-N-acetylglucosamine O-acyltransferase from Vibrio campbellii (strain ATCC BAA-1116).